A 697-amino-acid chain; its full sequence is DNA ligase (697 aa).

Residues 34 to 38, 83 to 84, and glutamate 114 contribute to the NAD(+) site; these read DKTYD and SL. The active-site N6-AMP-lysine intermediate is lysine 116. Positions 137, 171, 315, and 339 each coordinate NAD(+). 4 residues coordinate Zn(2+): cysteine 430, cysteine 433, cysteine 448, and cysteine 453. The BRCT domain maps to 616 to 697; sequence KKSSKLNNLN…FHNLLKEENA (82 aa).

The protein belongs to the NAD-dependent DNA ligase family. LigA subfamily. Requires Mg(2+) as cofactor. Mn(2+) serves as cofactor.

It catalyses the reaction NAD(+) + (deoxyribonucleotide)n-3'-hydroxyl + 5'-phospho-(deoxyribonucleotide)m = (deoxyribonucleotide)n+m + AMP + beta-nicotinamide D-nucleotide.. In terms of biological role, DNA ligase that catalyzes the formation of phosphodiester linkages between 5'-phosphoryl and 3'-hydroxyl groups in double-stranded DNA using NAD as a coenzyme and as the energy source for the reaction. It is essential for DNA replication and repair of damaged DNA. This chain is DNA ligase, found in Mycoplasmopsis synoviae (strain 53) (Mycoplasma synoviae).